The chain runs to 380 residues: NF-kappa-B inhibitor-like protein 1 (380 aa).

The tract at residues 1–34 (MSNPSPQVPEGEASTSVCRPKSSMASTSRRQRRE) is disordered. Residues 13–28 (ASTSVCRPKSSMASTS) show a composition bias toward polar residues. ANK repeat units lie at residues 64 to 93 (GQPP…DPAH) and 97 to 133 (HGDT…IKNK). Disordered stretches follow at residues 131 to 167 (KNKD…EWRQ) and 185 to 293 (EDDA…RGSL). S150 carries the phosphoserine modification. The span at 150–159 (SAEEEEEDEA) shows a compositional bias: acidic residues. Composition is skewed to basic and acidic residues over residues 204-221 (RMAR…ETEG) and 236-272 (RQQE…RDPV).

As to quaternary structure, interacts with CACTIN (via N-terminal domain); the interaction occurs in a pro-inflammatory-independent manner.

The protein resides in the nucleus. Its function is as follows. Involved in the regulation of innate immune response. Acts as negative regulator of Toll-like receptor and interferon-regulatory factor (IRF) signaling pathways. Contributes to the negative regulation of transcriptional activation of NF-kappa-B target genes in response to endogenous pro-inflammatory stimuli. This Sus scrofa (Pig) protein is NF-kappa-B inhibitor-like protein 1 (NFKBIL1).